Consider the following 65-residue polypeptide: Large ribosomal subunit protein bL35 (65 aa).

It belongs to the bacterial ribosomal protein bL35 family.

In Desulforapulum autotrophicum (strain ATCC 43914 / DSM 3382 / VKM B-1955 / HRM2) (Desulfobacterium autotrophicum), this protein is Large ribosomal subunit protein bL35.